Consider the following 566-residue polypeptide: Proline--tRNA ligase (566 aa).

It belongs to the class-II aminoacyl-tRNA synthetase family. ProS type 1 subfamily. Homodimer.

The protein localises to the cytoplasm. The enzyme catalyses tRNA(Pro) + L-proline + ATP = L-prolyl-tRNA(Pro) + AMP + diphosphate. In terms of biological role, catalyzes the attachment of proline to tRNA(Pro) in a two-step reaction: proline is first activated by ATP to form Pro-AMP and then transferred to the acceptor end of tRNA(Pro). As ProRS can inadvertently accommodate and process non-cognate amino acids such as alanine and cysteine, to avoid such errors it has two additional distinct editing activities against alanine. One activity is designated as 'pretransfer' editing and involves the tRNA(Pro)-independent hydrolysis of activated Ala-AMP. The other activity is designated 'posttransfer' editing and involves deacylation of mischarged Ala-tRNA(Pro). The misacylated Cys-tRNA(Pro) is not edited by ProRS. In Exiguobacterium sibiricum (strain DSM 17290 / CCUG 55495 / CIP 109462 / JCM 13490 / 255-15), this protein is Proline--tRNA ligase.